The primary structure comprises 136 residues: Ergosterol biosynthetic protein 28 (136 aa).

4 helical membrane passes run 18 to 34 (VVVSVAALFNTVQSFLT), 56 to 72 (FGIWTLLSAIVRFYCAY), 79 to 95 (VYFLCQCTYYLACFHFL), and 109 to 125 (GLLSPIVVSTVSIWFMA).

It belongs to the ERG28 family. In terms of assembly, heterotetramer of erg25, erg26, erg27 and erg28. Erg28 acts as a scaffold to tether erg27 and other 4,4-demethylation-related enzymes, forming a demethylation enzyme complex, in the endoplasmic reticulum.

Its subcellular location is the endoplasmic reticulum membrane. Its pathway is steroid metabolism; ergosterol biosynthesis. Part of the third module of ergosterol biosynthesis pathway that includes by the late steps of the pathway. Erg28 has a role as a scaffold to help anchor the catalytic components of the C-4 demethylation complex erg25, erg26 and erg27 to the endoplasmic reticulum. The third module or late pathway involves the ergosterol synthesis itself through consecutive reactions that mainly occur in the endoplasmic reticulum (ER) membrane. Firstly, the squalene synthase erg9 catalyzes the condensation of 2 farnesyl pyrophosphate moieties to form squalene, which is the precursor of all steroids. Secondly, squalene is converted into lanosterol by the consecutive action of the squalene epoxidase erg1 and the lanosterol synthase erg7. The lanosterol 14-alpha-demethylase erg11/cyp1 catalyzes C14-demethylation of lanosterol to produce 4,4'-dimethyl cholesta-8,14,24-triene-3-beta-ol. In the next steps, a complex process involving various demethylation, reduction and desaturation reactions catalyzed by the C-14 reductase erg24 and the C-4 demethylation complex erg25-erg26-erg27 leads to the production of zymosterol. Erg28 likely functions in the C-4 demethylation complex reaction by tethering erg26 and Erg27 to the endoplasmic reticulum or to facilitate interaction between these proteins. Then, the sterol 24-C-methyltransferase erg6 catalyzes the methyl transfer from S-adenosyl-methionine to the C-24 of zymosterol to form fecosterol. The C-8 sterol isomerase erg2 catalyzes the reaction which results in unsaturation at C-7 in the B ring of sterols and thus converts fecosterol to episterol. The sterol-C5-desaturases erg31 and erg32 then catalyze the introduction of a C-5 double bond in the B ring to produce 5-dehydroepisterol. The C-22 sterol desaturase erg5 further converts 5-dehydroepisterol into ergosta-5,7,22,24(28)-tetraen-3beta-ol by forming the C-22(23) double bond in the sterol side chain. Finally, ergosta-5,7,22,24(28)-tetraen-3beta-ol is substrate of the C-24(28) sterol reductase erg4 to produce ergosterol. In the genus Schizosaccharomyces, a second route exists between lanosterol and fecosterol, via the methylation of lanosterol to eburicol by erg6, followed by C14-demethylation by erg11/cyp1 and C4-demethylation by the demethylation complex erg25-erg26-erg27. Its function is as follows. Extends the chronological lifespan when overexpressed. The chain is Ergosterol biosynthetic protein 28 from Schizosaccharomyces pombe (strain 972 / ATCC 24843) (Fission yeast).